A 316-amino-acid polypeptide reads, in one-letter code: Probable 5-dehydro-4-deoxyglucarate dehydratase (316 aa).

This sequence belongs to the DapA family.

It carries out the reaction 5-dehydro-4-deoxy-D-glucarate + H(+) = 2,5-dioxopentanoate + CO2 + H2O. It participates in carbohydrate acid metabolism; D-glucarate degradation; 2,5-dioxopentanoate from D-glucarate: step 2/2. This chain is Probable 5-dehydro-4-deoxyglucarate dehydratase, found in Corynebacterium glutamicum (strain R).